Here is a 247-residue protein sequence, read N- to C-terminus: E3 SUMO-protein ligase NSE2 (247 aa).

An N-acetylmethionine modification is found at methionine 1. Glycyl lysine isopeptide (Lys-Gly) (interchain with G-Cter in SUMO2) cross-links involve residues lysine 90 and lysine 107. Phosphoserine is present on serine 116. Glycyl lysine isopeptide (Lys-Gly) (interchain with G-Cter in SUMO2) cross-links involve residues lysine 125 and lysine 130. The segment at 154-240 adopts an SP-RING-type zinc-finger fold; it reads VDEDMIVTQS…LRRAIESHNK (87 aa). Zn(2+) contacts are provided by cysteine 185, histidine 187, cysteine 210, and cysteine 215.

Belongs to the NSE2 family. In terms of assembly, component of the SMC5-SMC6 complex which consists at least of SMC5, SMC6, NSMCE2, NSMCE1, NSMCE4A or EID3 and NSMCE3. Post-translationally, sumoylated, possibly via autosumoylation.

It is found in the nucleus. The protein resides in the chromosome. Its subcellular location is the telomere. The protein localises to the PML body. Its pathway is protein modification; protein sumoylation. In terms of biological role, E3 SUMO-protein ligase component of the SMC5-SMC6 complex, a complex involved in DNA double-strand break repair by homologous recombination. Is not be required for the stability of the complex. The complex may promote sister chromatid homologous recombination by recruiting the SMC1-SMC3 cohesin complex to double-strand breaks. Acts as an E3 ligase mediating SUMO attachment to various proteins such as SMC6L1 and TSNAX, the shelterin complex subunits TERF1, TERF2, TINF2 and TERF2IP, RAD51AP1, and maybe the cohesin components RAD21 and STAG2. Required for recruitment of telomeres to PML nuclear bodies. Required for sister chromatid cohesion during prometaphase and mitotic progression. This is E3 SUMO-protein ligase NSE2 (Nsmce2) from Mus musculus (Mouse).